A 37-amino-acid chain; its full sequence is Large ribosomal subunit protein bL36c (37 aa).

It belongs to the bacterial ribosomal protein bL36 family.

The protein localises to the plastid. This Aneura mirabilis (Parasitic liverwort) protein is Large ribosomal subunit protein bL36c.